Reading from the N-terminus, the 991-residue chain is Receptor-like protein kinase HAIKU2 (991 aa).

The first 19 residues, 1–19 (MLRLLFIVRLLFLMPLASS), serve as a signal peptide directing secretion. Residues 20–616 (RSNHSEEVEN…KRKHLSKVDM (597 aa)) are Extracellular-facing. The N-linked (GlcNAc...) asparagine glycan is linked to Asn22. LRR repeat units lie at residues 66–90 (DGNV…RFTD), 99–123 (LKLL…LGKC), 125–148 (RLRY…SLQL), 150–170 (EFLS…SLKD), 171–196 (LKRL…ILNL), 197–220 (TALQ…IKNL), 221–244 (VRLQ…IVQL), 246–267 (NLRQ…GFRN), 269–291 (TNLR…LRFL), 292–314 (KNLV…EFGD), 315–339 (FKSL…LGSW), 341–363 (AFKY…MCKK), 365–387 (VMTH…YAKC), 388–411 (KTLI…IWGL), 413–435 (NLQF…IGNA), 436–459 (KSLG…ISGA), 461–482 (SLVS…SFGK), 483–508 (LKEL…GLCT), 510–531 (LVDL…LGSL), 532–554 (KLLN…GLSA), and 555–578 (LKLS…LVSG). 5 N-linked (GlcNAc...) asparagine glycosylation sites follow: Asn109, Asn135, Asn155, Asn195, and Asn206. N-linked (GlcNAc...) asparagine glycans are attached at residues Asn267 and Asn278. 2 N-linked (GlcNAc...) asparagine glycosylation sites follow: Asn397 and Asn427. Asn495 is a glycosylation site (N-linked (GlcNAc...) asparagine). N-linked (GlcNAc...) asparagine glycosylation is present at Asn538. The helical transmembrane segment at 617-637 (CFIVAAILALFFLFSYVIFKI) threads the bilayer. The Cytoplasmic segment spans residues 638 to 991 (RRDKLNKTVQ…SANDEITKVV (354 aa)). The Protein kinase domain occupies 671–970 (IKSENIIGRG…SMLEKIEPSY (300 aa)). ATP is bound by residues 677–685 (IGRGGQGNV) and Lys699. Residues Tyr762 and Tyr801 each carry the phosphotyrosine modification. Asp814 functions as the Proton acceptor in the catalytic mechanism. Residues Tyr859 and Tyr866 each carry the phosphotyrosine modification. Thr867 is modified (phosphothreonine). Residues 972 to 991 (KNSGEASYGESANDEITKVV) are disordered.

It belongs to the protein kinase superfamily. Ser/Thr protein kinase family. Expressed in the endosperm of fertilized ovules.

The protein localises to the membrane. It carries out the reaction L-seryl-[protein] + ATP = O-phospho-L-seryl-[protein] + ADP + H(+). The catalysed reaction is L-threonyl-[protein] + ATP = O-phospho-L-threonyl-[protein] + ADP + H(+). In terms of biological role, modulates the seed size by negatively regulating the cellularization of syncytial endosperm. The polypeptide is Receptor-like protein kinase HAIKU2 (IKU2) (Arabidopsis thaliana (Mouse-ear cress)).